An 863-amino-acid chain; its full sequence is Ribosomal protein S6 kinase alpha-5 (863 aa).

Residues 1 to 21 (MEGEGGGSGGAGTSGDSGDGG) are compositionally biased toward gly residues. The interval 1–22 (MEGEGGGSGGAGTSGDSGDGGE) is disordered. One can recognise a Protein kinase 1 domain in the interval 48–317 (FELLKVLGTG…AEEIKEHLFF (270 aa)). Residues 54–62 (LGTGAYGKV) and Lys-80 contribute to the ATP site. Asp-176 (proton acceptor) is an active-site residue. Ser-211 is modified (phosphoserine; by autocatalysis). The 69-residue stretch at 318 to 386 (EKIKWDDLAA…VAPSILFKRN (69 aa)) folds into the AGC-kinase C-terminal domain. Ser-359 bears the Phosphoserine; by MAPK1, MAPK3 and MAPK14 mark. A phosphoserine; by autocatalysis mark is found at Ser-375 and Ser-380. In terms of domain architecture, Protein kinase 2 spans 428-675 (DKPLGEGSFS…SCDLWSLGVI (248 aa)). Residues 431 to 440 (LGEGSFSICR) and Lys-454 each bind ATP. Asp-608 (proton acceptor) is an active-site residue. Thr-645 carries the post-translational modification Phosphothreonine; by MAPK1, MAPK3 and MAPK14. Phosphoserine occurs at positions 711, 721, 755, and 759. At Thr-764 the chain carries Phosphothreonine. The disordered stretch occupies residues 805-863 (AKRRKMKRTSTSTETRSSSSESSRSSSSQSHGKTTPTKTLQPSNPTEGSNPDTLFQFSD). Low complexity predominate over residues 813–832 (TSTSTETRSSSSESSRSSSS). A phosphoserine; by autocatalysis mark is found at Ser-814, Ser-816, and Ser-822. Polar residues predominate over residues 833–863 (QSHGKTTPTKTLQPSNPTEGSNPDTLFQFSD). Ser-862 is modified (phosphoserine).

This sequence belongs to the protein kinase superfamily. AGC Ser/Thr protein kinase family. S6 kinase subfamily. In terms of assembly, forms a complex with either MAPK1/ERK2 or MAPK3/ERK1 in quiescent cells which transiently dissociates following mitogenic stimulation. Also associates with MAPK14/p38-alpha. Activated RPS6KA5 associates with and phosphorylates the NF-kappa-B p65 subunit RELA. Interacts with CREBBP and EP300. It depends on Mg(2+) as a cofactor. Ser-375 and Thr-645 phosphorylation is required for kinase activity. Ser-375 and Ser-211 are autophosphorylated by the C-terminal kinase domain, and their phosphorylation is essential for the catalytic activity of the N-terminal kinase domain. Phosphorylated at Ser-359, Thr-645 and Thr-764 by MAPK1/ERK2, MAPK3/ERK1 and MAPK14/p38-alpha. Autophosphorylated at Ser-814, Ser-816 and Ser-822 by the N-terminal kinase domain. In terms of processing, ubiquitinated.

The protein resides in the nucleus. The catalysed reaction is L-seryl-[protein] + ATP = O-phospho-L-seryl-[protein] + ADP + H(+). It carries out the reaction L-threonyl-[protein] + ATP = O-phospho-L-threonyl-[protein] + ADP + H(+). With respect to regulation, activated by phosphorylation at Ser-359, Thr-645 and Thr-764 by MAPK1/ERK2, MAPK3/ERK1 and MAPK14/p38-alpha, and by further autophosphorylation of Ser-211, Ser-375 and Ser-380 by the activated C-terminal kinase domain. The active N-terminal kinase domain finally phosphorylates downstream substrates, as well as Ser-814, Ser-816 and Ser-822 in its own C-terminal region. Its function is as follows. Serine/threonine-protein kinase that is required for the mitogen or stress-induced phosphorylation of the transcription factors CREB1 and ATF1 and for the regulation of the transcription factors RELA, STAT3 and ETV1/ER81, and that contributes to gene activation by histone phosphorylation and functions in the regulation of inflammatory genes. Phosphorylates CREB1 and ATF1 in response to mitogenic or stress stimuli such as UV-C irradiation, epidermal growth factor (EGF) and anisomycin. Plays an essential role in the control of RELA transcriptional activity in response to TNF and upon glucocorticoid, associates in the cytoplasm with the glucocorticoid receptor NR3C1 and contributes to RELA inhibition and repression of inflammatory gene expression. In skeletal myoblasts is required for phosphorylation of RELA at 'Ser-276' during oxidative stress. In erythropoietin-stimulated cells, is necessary for the 'Ser-727' phosphorylation of STAT3 and regulation of its transcriptional potential. Phosphorylates ETV1/ER81 at 'Ser-191' and 'Ser-216', and thereby regulates its ability to stimulate transcription, which may be important during development and breast tumor formation. Directly represses transcription via phosphorylation of 'Ser-1' of histone H2A. Phosphorylates 'Ser-10' of histone H3 in response to mitogenics, stress stimuli and EGF, which results in the transcriptional activation of several immediate early genes, including proto-oncogenes c-fos/FOS and c-jun/JUN. May also phosphorylate 'Ser-28' of histone H3. Mediates the mitogen- and stress-induced phosphorylation of high mobility group protein 1 (HMGN1/HMG14). In lipopolysaccharide-stimulated primary macrophages, acts downstream of the Toll-like receptor TLR4 to limit the production of pro-inflammatory cytokines. Functions probably by inducing transcription of the MAP kinase phosphatase DUSP1 and the anti-inflammatory cytokine interleukin 10 (IL10), via CREB1 and ATF1 transcription factors. Plays a role in neuronal cell death by mediating the downstream effects of excitotoxic injury. Phosphorylates TRIM7 at 'Ser-106' in response to growth factor signaling via the MEK/ERK pathway, thereby stimulating its ubiquitin ligase activity. The sequence is that of Ribosomal protein S6 kinase alpha-5 (Rps6ka5) from Mus musculus (Mouse).